The following is a 304-amino-acid chain: C-type lectin domain family 10 member A (304 aa).

The Cytoplasmic segment spans residues 1-35 (MIYENLQNSRIEEKTQEPGKAPSQSFLWRILSWTH). A helical; Signal-anchor for type II membrane protein membrane pass occupies residues 36–56 (LLLFSLGLSLLLLVVVSVIGS). Residues 57–304 (QNSQLRRDLG…ICEMKLAKES (248 aa)) lie on the Extracellular side of the membrane. N-linked (GlcNAc...) asparagine glycosylation is found at N74 and N166. The 127-residue stretch at 172-298 (CCPLHWTEHE…QRTFRWICEM (127 aa)) folds into the C-type lectin domain. 3 disulfide bridges follow: C173-C184, C201-C296, and C274-C288.

In terms of assembly, homooligomer. Interacts with SIGLEC1, which may act as a counter-receptor for CLEC10A in lymph node. In terms of tissue distribution, detected in lymph node in the subcapsular sinus, interfollicular regions, T and B-cell boundary and in the areas surrounding high endothelial venules (at protein level). Expressed on the surface of activated macrophages. Expressed in heart, lung, testis, skeletal muscle, spleen, brain, kidney and thymus. Expressed in P388, RAW 264.7 and M1 cell lines.

Its subcellular location is the membrane. Its function is as follows. Recognizes terminal galactose and N-acetylgalactosamine units. May participate in the interaction between tumoricidal macrophages and tumor cells. Plays a role in the recruitment of inflammatory monocytes to adipose tissue in diet-induced obesity. This Mus musculus (Mouse) protein is C-type lectin domain family 10 member A (Clec10a).